A 236-amino-acid polypeptide reads, in one-letter code: Purine nucleoside phosphorylase DeoD-type 1 (236 aa).

Histidine 5 is an a purine D-ribonucleoside binding site. Residues glycine 21, arginine 25, arginine 44, and 88–91 (RVGS) contribute to the phosphate site. A purine D-ribonucleoside is bound by residues 180–182 (EME) and 204–205 (TD). The Proton donor role is filled by aspartate 205.

This sequence belongs to the PNP/UDP phosphorylase family. As to quaternary structure, homohexamer; trimer of homodimers.

It carries out the reaction a purine D-ribonucleoside + phosphate = a purine nucleobase + alpha-D-ribose 1-phosphate. The catalysed reaction is a purine 2'-deoxy-D-ribonucleoside + phosphate = a purine nucleobase + 2-deoxy-alpha-D-ribose 1-phosphate. Catalyzes the reversible phosphorolytic breakdown of the N-glycosidic bond in the beta-(deoxy)ribonucleoside molecules, with the formation of the corresponding free purine bases and pentose-1-phosphate. The protein is Purine nucleoside phosphorylase DeoD-type 1 of Shewanella oneidensis (strain ATCC 700550 / JCM 31522 / CIP 106686 / LMG 19005 / NCIMB 14063 / MR-1).